We begin with the raw amino-acid sequence, 1392 residues long: ATP-dependent helicase/nuclease subunit A (1392 aa).

The UvrD-like helicase ATP-binding domain occupies 4–595 (FKPTPAQSKA…IVLGENFRSM (592 aa)). 25 to 32 (ASAGSGKT) contacts ATP. The 307-residue stretch at 623–929 (AHLKYAATYY…NVMTIHGSKG (307 aa)) folds into the UvrD-like helicase C-terminal domain.

Belongs to the helicase family. AddA subfamily. Heterodimer of AddA and AddB/RexB. Mg(2+) is required as a cofactor.

It catalyses the reaction Couples ATP hydrolysis with the unwinding of duplex DNA by translocating in the 3'-5' direction.. The enzyme catalyses ATP + H2O = ADP + phosphate + H(+). In terms of biological role, the heterodimer acts as both an ATP-dependent DNA helicase and an ATP-dependent, dual-direction single-stranded exonuclease. Recognizes the chi site generating a DNA molecule suitable for the initiation of homologous recombination. The AddA nuclease domain is required for chi fragment generation; this subunit has the helicase and 3' -&gt; 5' nuclease activities. The chain is ATP-dependent helicase/nuclease subunit A from Limosilactobacillus reuteri subsp. reuteri (strain JCM 1112) (Lactobacillus reuteri).